Here is a 133-residue protein sequence, read N- to C-terminus: Small ribosomal subunit protein uS8 (133 aa).

Belongs to the universal ribosomal protein uS8 family. In terms of assembly, part of the 30S ribosomal subunit. Contacts proteins S5 and S12.

Its function is as follows. One of the primary rRNA binding proteins, it binds directly to 16S rRNA central domain where it helps coordinate assembly of the platform of the 30S subunit. The protein is Small ribosomal subunit protein uS8 of Chlamydia caviae (strain ATCC VR-813 / DSM 19441 / 03DC25 / GPIC) (Chlamydophila caviae).